Consider the following 489-residue polypeptide: 6-phosphogluconate dehydrogenase, decarboxylating 1 (489 aa).

NADP(+) contacts are provided by residues 9–14 (GLAVMG) and 32–34 (NRT). S50 is modified (phosphoserine). Residues 74–76 (VKA) and N102 contribute to the NADP(+) site. Substrate is bound by residues N102 and 128 to 130 (SGG). Residue K182 is the Proton acceptor of the active site. 185 to 186 (HN) is a substrate binding site. The active-site Proton donor is E189. Substrate contacts are provided by Y190, K259, R286, R446, and H452.

This sequence belongs to the 6-phosphogluconate dehydrogenase family. In terms of assembly, homodimer.

Its subcellular location is the cytoplasm. The catalysed reaction is 6-phospho-D-gluconate + NADP(+) = D-ribulose 5-phosphate + CO2 + NADPH. It participates in carbohydrate degradation; pentose phosphate pathway; D-ribulose 5-phosphate from D-glucose 6-phosphate (oxidative stage): step 3/3. In terms of biological role, catalyzes the oxidative decarboxylation of 6-phosphogluconate to ribulose 5-phosphate and CO(2), with concomitant reduction of NADP to NADPH. The chain is 6-phosphogluconate dehydrogenase, decarboxylating 1 (GND1) from Saccharomyces cerevisiae (strain ATCC 204508 / S288c) (Baker's yeast).